A 450-amino-acid polypeptide reads, in one-letter code: Probable glucoamylase (450 aa).

The signal sequence occupies residues 1 to 16 (MRTYWLFLLLGGVVSA). Positions 17-28 (ESLLSPNKRSKE) are excised as a propeptide. A substrate-binding site is contributed by Trp-147. Catalysis depends on Asp-203, which acts as the Proton acceptor. Catalysis depends on Glu-206, which acts as the Proton donor. 2 N-linked (GlcNAc...) asparagine glycosylation sites follow: Asn-383 and Asn-409.

The protein belongs to the glycosyl hydrolase 15 family.

It catalyses the reaction Hydrolysis of terminal (1-&gt;4)-linked alpha-D-glucose residues successively from non-reducing ends of the chains with release of beta-D-glucose.. This chain is Probable glucoamylase (meu17), found in Schizosaccharomyces pombe (strain 972 / ATCC 24843) (Fission yeast).